The chain runs to 673 residues: Methionine--tRNA ligase (673 aa).

Residues 13–23 (PYTNGFCHLGH) carry the 'HIGH' region motif. 4 residues coordinate Zn(2+): cysteine 144, cysteine 147, cysteine 156, and cysteine 160. The 'KMSKS' region signature appears at 325-329 (KFSKS). Residue lysine 328 participates in ATP binding. The region spanning 575–673 (DVAKLDLRVG…KDVPEGTKVH (99 aa)) is the tRNA-binding domain.

It belongs to the class-I aminoacyl-tRNA synthetase family. MetG type 1 subfamily. In terms of assembly, homodimer. Zn(2+) serves as cofactor.

Its subcellular location is the cytoplasm. The enzyme catalyses tRNA(Met) + L-methionine + ATP = L-methionyl-tRNA(Met) + AMP + diphosphate. Functionally, is required not only for elongation of protein synthesis but also for the initiation of all mRNA translation through initiator tRNA(fMet) aminoacylation. The protein is Methionine--tRNA ligase of Methanocorpusculum labreanum (strain ATCC 43576 / DSM 4855 / Z).